A 394-amino-acid polypeptide reads, in one-letter code: NAD(P)H-quinone oxidoreductase subunit H (394 aa).

It belongs to the complex I 49 kDa subunit family. As to quaternary structure, NDH-1 can be composed of about 15 different subunits; different subcomplexes with different compositions have been identified which probably have different functions.

The protein localises to the cellular thylakoid membrane. The catalysed reaction is a plastoquinone + NADH + (n+1) H(+)(in) = a plastoquinol + NAD(+) + n H(+)(out). It catalyses the reaction a plastoquinone + NADPH + (n+1) H(+)(in) = a plastoquinol + NADP(+) + n H(+)(out). In terms of biological role, NDH-1 shuttles electrons from an unknown electron donor, via FMN and iron-sulfur (Fe-S) centers, to quinones in the respiratory and/or the photosynthetic chain. The immediate electron acceptor for the enzyme in this species is believed to be plastoquinone. Couples the redox reaction to proton translocation, and thus conserves the redox energy in a proton gradient. Cyanobacterial NDH-1 also plays a role in inorganic carbon-concentration. The chain is NAD(P)H-quinone oxidoreductase subunit H from Synechococcus sp. (strain JA-3-3Ab) (Cyanobacteria bacterium Yellowstone A-Prime).